The primary structure comprises 260 residues: Homeobox protein Hox-D11b (260 aa).

Over residues 1 to 14 (MFSSSFSYPSKTSP) the composition is skewed to low complexity. Disordered regions lie at residues 1–21 (MFSS…PFLA) and 151–206 (ITPG…CTRR). The segment covering 167–179 (RSPDGESSEERAG) has biased composition (basic and acidic residues). Positions 205–260 (RRKKRCPYSKQQIIELEREFLFNIYINKDRRMQLSHLLRLTDRCVNNPLNQDSFFT) form a DNA-binding region, homeobox; truncated.

The protein belongs to the Abd-B homeobox family.

The protein resides in the nucleus. Sequence-specific transcription factor which is part of a developmental regulatory system that provides cells with specific positional identities on the anterior-posterior axis. The sequence is that of Homeobox protein Hox-D11b (hoxd11b) from Takifugu rubripes (Japanese pufferfish).